We begin with the raw amino-acid sequence, 114 residues long: Gas vesicle protein J1 (114 aa).

Residues 13-22 form an alpha helix 1 region; it reads LAEMLEMLLD. 2 beta-strand regions span residues 25-35 and 40-50; these read VVVNADIAVSV and LLGIELRAAIA. The Conserved in GvpM1/2 but not GvpA signature appears at 46-50; that stretch reads RAAIA. Alpha helix stretches follow at residues 52 to 72, 78 to 87, and 95 to 105; these read FETA…ERVE, SPDQSDPASE, and TNPLSDDSTPT. The disordered stretch occupies residues 63-114; sequence PTGTDMERVESAANISPDQSDPASETQSETESTNPLSDDSTPTASTSAEETK. The span at 75–98 shows a compositional bias: polar residues; that stretch reads ANISPDQSDPASETQSETESTNPL. Positions 99–114 are enriched in low complexity; the sequence is SDDSTPTASTSAEETK.

The protein belongs to the gas vesicle GvpA family. In terms of assembly, gvpF to GvpM interact with each other in vitro, and may form multi-subunit complex(es). Interacts with GvpA1.

It is found in the gas vesicle. In terms of biological role, proteins GvpF to GvpM might be involved in nucleating gas vesicle formation. Mutagenesis of residues 13-61 shows that almost none of them can be substituted and still make gas vesicles. A minor component of the gas vesicle. Gas vesicles are hollow, gas filled proteinaceous nanostructures found in several microbial planktonic microorganisms. They allow positioning of halobacteria at the optimal depth for growth in the poorly aerated, shallow brine pools of their habitat. Expression of a 9.5 kb p-vac DNA fragment containing 2 divergently transcribed regions (gvpD-gvpE-gvpF-gvpG-gvpH-gvpI-gvpJ-gvpK-gvpL-gvpM and gvpA-gvpC-gvpN-gvpO) allows H.volcanii to produce gas vesicles. All site-directed mutagenesis is tested in H.volcanii. A minimal gas vesicle can be made in H.volcanii by gvpA1-gvpO1 plus gvpF1-gvpG1-gvpJ1-gvpK1-gvpL1-gvpM1; lack of enough GvpJ1 prevents formation. A similar region restores gas vesicle production in H.halobium without the p-vac locus, but it still has the c-vac locus. The sequence is that of Gas vesicle protein J1 (gvpJ11) from Halobacterium salinarum (strain ATCC 700922 / JCM 11081 / NRC-1) (Halobacterium halobium).